A 74-amino-acid chain; its full sequence is uncharacterized protein (74 aa).

This is an uncharacterized protein from Sinorhizobium fredii (strain NBRC 101917 / NGR234).